The primary structure comprises 425 residues: CinA-like protein (425 aa).

Belongs to the CinA family.

The chain is CinA-like protein from Shewanella sp. (strain ANA-3).